Reading from the N-terminus, the 207-residue chain is Large ribosomal subunit protein uL4 (207 aa).

The interval 48-87 is disordered; that stretch reads THAVKNRSAVSGGGKKPWRQKGTGRARQGSIRSPQFRGGG.

Belongs to the universal ribosomal protein uL4 family. In terms of assembly, part of the 50S ribosomal subunit.

One of the primary rRNA binding proteins, this protein initially binds near the 5'-end of the 23S rRNA. It is important during the early stages of 50S assembly. It makes multiple contacts with different domains of the 23S rRNA in the assembled 50S subunit and ribosome. Functionally, forms part of the polypeptide exit tunnel. This chain is Large ribosomal subunit protein uL4, found in Limosilactobacillus reuteri subsp. reuteri (strain JCM 1112) (Lactobacillus reuteri).